A 384-amino-acid polypeptide reads, in one-letter code: Queuine tRNA-ribosyltransferase (384 aa).

Residue aspartate 92 is the Proton acceptor of the active site. Substrate is bound by residues 92-96, aspartate 146, glutamine 190, and glycine 217; that span reads DSGGF. Positions 248–254 are RNA binding; the sequence is GVGRPED. Aspartate 267 functions as the Nucleophile in the catalytic mechanism. Residues 272 to 276 form an RNA binding; important for wobble base 34 recognition region; sequence TRHAR. The Zn(2+) site is built by cysteine 305, cysteine 307, cysteine 310, and histidine 337.

Belongs to the queuine tRNA-ribosyltransferase family. In terms of assembly, homodimer. Within each dimer, one monomer is responsible for RNA recognition and catalysis, while the other monomer binds to the replacement base PreQ1. Requires Zn(2+) as cofactor.

It catalyses the reaction 7-aminomethyl-7-carbaguanine + guanosine(34) in tRNA = 7-aminomethyl-7-carbaguanosine(34) in tRNA + guanine. It participates in tRNA modification; tRNA-queuosine biosynthesis. Its function is as follows. Catalyzes the base-exchange of a guanine (G) residue with the queuine precursor 7-aminomethyl-7-deazaguanine (PreQ1) at position 34 (anticodon wobble position) in tRNAs with GU(N) anticodons (tRNA-Asp, -Asn, -His and -Tyr). Catalysis occurs through a double-displacement mechanism. The nucleophile active site attacks the C1' of nucleotide 34 to detach the guanine base from the RNA, forming a covalent enzyme-RNA intermediate. The proton acceptor active site deprotonates the incoming PreQ1, allowing a nucleophilic attack on the C1' of the ribose to form the product. After dissociation, two additional enzymatic reactions on the tRNA convert PreQ1 to queuine (Q), resulting in the hypermodified nucleoside queuosine (7-(((4,5-cis-dihydroxy-2-cyclopenten-1-yl)amino)methyl)-7-deazaguanosine). This Xylella fastidiosa (strain 9a5c) protein is Queuine tRNA-ribosyltransferase.